The following is a 119-amino-acid chain: Acidic phospholipase A2 2 (119 aa).

Disulfide bonds link Cys-11–Cys-71, Cys-26–Cys-118, Cys-28–Cys-44, Cys-43–Cys-99, Cys-50–Cys-92, Cys-60–Cys-85, and Cys-78–Cys-90. Tyr-27, Gly-29, and Gly-31 together coordinate Ca(2+). His-47 is an active-site residue. Asp-48 serves as a coordination point for Ca(2+). Residue Asp-93 is part of the active site.

This sequence belongs to the phospholipase A2 family. Group I subfamily. D49 sub-subfamily. As to quaternary structure, homotrimer. Ca(2+) serves as cofactor. Expressed by the venom gland.

The protein resides in the secreted. The enzyme catalyses a 1,2-diacyl-sn-glycero-3-phosphocholine + H2O = a 1-acyl-sn-glycero-3-phosphocholine + a fatty acid + H(+). In terms of biological role, PLA2 catalyzes the calcium-dependent hydrolysis of the 2-acyl groups in 3-sn-phosphoglycerides. The chain is Acidic phospholipase A2 2 from Naja naja (Indian cobra).